The sequence spans 142 residues: Galactose-6-phosphate isomerase subunit LacA (142 aa).

This sequence belongs to the LacAB/RpiB family. In terms of assembly, heteromultimeric protein consisting of LacA and LacB.

The enzyme catalyses aldehydo-D-galactose 6-phosphate = keto-D-tagatose 6-phosphate. It functions in the pathway carbohydrate metabolism; D-galactose 6-phosphate degradation; D-tagatose 6-phosphate from D-galactose 6-phosphate: step 1/1. The polypeptide is Galactose-6-phosphate isomerase subunit LacA (Streptococcus mutans serotype c (strain ATCC 700610 / UA159)).